The following is a 1526-amino-acid chain: Myosin type-2 heavy chain 1 (1526 aa).

Residues 22–73 (DDKRWVWISDPETAFTKAWIKEDLPDKKYVVRYNNSRDEKIVGEDEIDPVNP) form the Myosin N-terminal SH3-like domain. In terms of domain architecture, Myosin motor spans 77–755 (DRVNDMAELT…VLAELEERRV (679 aa)). Residue 170-177 (GESGAGKT) coordinates ATP. 2 actin-binding regions span residues 634 to 656 (LNQL…VPNE) and 734 to 748 (RIGV…GVLA). In terms of domain architecture, IQ spans 758–787 (LQRLMTMLQTRIRGFLQRKIFQKRLKDIQA). The stretch at 875 to 1244 (ALDKEEILRR…SLTKQVNELS (370 aa)) forms a coiled coil. S1044 carries the phosphoserine modification.

Belongs to the TRAFAC class myosin-kinesin ATPase superfamily. Myosin family. As to quaternary structure, binds to cdc4 and rlc1.

Required for cell division. It is a component of the cdc12 'spot', a structure thought to mark the site of septation. May work in conjunction with myo3. The chain is Myosin type-2 heavy chain 1 (myo2) from Schizosaccharomyces pombe (strain 972 / ATCC 24843) (Fission yeast).